Reading from the N-terminus, the 638-residue chain is LIM domain kinase 2 (638 aa).

LIM zinc-binding domains lie at 12–63 (CRGC…CHKD) and 72–124 (CHGC…CGKC). In terms of domain architecture, PDZ spans 152–239 (LISMPATTEC…TLQLLIEHDP (88 aa)). Thr210 is modified (phosphothreonine). A compositionally biased stretch (polar residues) spans 257–266 (MQSSGHTLML). Residues 257–304 (MQSSGHTLMLSTLDAKENQEGTLRRRSLRRSNSISKSPGPSSPKEPLL) form a disordered region. Over residues 270 to 279 (DAKENQEGTL) the composition is skewed to basic and acidic residues. Residues 286–304 (RSNSISKSPGPSSPKEPLL) show a composition bias toward low complexity. Phosphoserine occurs at positions 293 and 298. The 278-residue stretch at 331–608 (LIHGEVLGKG…DSFEALSLFL (278 aa)) folds into the Protein kinase domain. Residues 337–345 (LGKGFFGQA) and Lys360 each bind ATP. Asp451 is an active-site residue. Thr505 carries the phosphothreonine; by ROCK1 and CDC42BP modification.

Belongs to the protein kinase superfamily. TKL Ser/Thr protein kinase family. In terms of assembly, binds ROCK1 and MARF1. Interacts with NISCH. In terms of processing, phosphorylated on serine and/or threonine residues by ROCK1. Found in various tissues at moderate levels, except for testis, which shows very low expression.

It is found in the cytoplasm. The protein localises to the nucleus. The protein resides in the perinuclear region. Its subcellular location is the cytoskeleton. It localises to the spindle. It is found in the microtubule organizing center. The protein localises to the centrosome. The enzyme catalyses L-seryl-[protein] + ATP = O-phospho-L-seryl-[protein] + ADP + H(+). It catalyses the reaction L-threonyl-[protein] + ATP = O-phospho-L-threonyl-[protein] + ADP + H(+). Serine/threonine-protein kinase that plays an essential role in the regulation of actin filament dynamics. Acts downstream of several Rho family GTPase signal transduction pathways. Involved in astral microtubule organization and mitotic spindle orientation during early stages of mitosis by mediating phosphorylation of TPPP. Displays serine/threonine-specific phosphorylation of myelin basic protein and histone (MBP) in vitro. Suppresses ciliogenesis via multiple pathways; phosphorylation of CFL1, directional trafficking of ciliary vesicles to the ciliary base, and by facilitating YAP1 nuclear localization where it acts as a transcriptional corepressor of the TEAD4 target genes AURKA and PLK1. This chain is LIM domain kinase 2 (Limk2), found in Rattus norvegicus (Rat).